A 130-amino-acid chain; its full sequence is Small ribosomal subunit protein uS11 (130 aa).

It belongs to the universal ribosomal protein uS11 family. In terms of assembly, part of the 30S ribosomal subunit. Interacts with proteins S7 and S18. Binds to IF-3.

Located on the platform of the 30S subunit, it bridges several disparate RNA helices of the 16S rRNA. Forms part of the Shine-Dalgarno cleft in the 70S ribosome. The protein is Small ribosomal subunit protein uS11 of Teredinibacter turnerae (strain ATCC 39867 / T7901).